A 174-amino-acid polypeptide reads, in one-letter code: Ribosome maturation factor RimP (174 aa).

It belongs to the RimP family.

It is found in the cytoplasm. Functionally, required for maturation of 30S ribosomal subunits. The polypeptide is Ribosome maturation factor RimP (Acinetobacter baylyi (strain ATCC 33305 / BD413 / ADP1)).